Reading from the N-terminus, the 610-residue chain is UvrABC system protein C (610 aa).

In terms of domain architecture, GIY-YIG spans 16 to 94 (SQPGVYRMYD…IKLYQPRYNV (79 aa)). The 36-residue stretch at 204-239 (DQVLTQLIARMEKASQDLAFEEAARIRDQIQAVRRV) folds into the UVR domain.

This sequence belongs to the UvrC family. In terms of assembly, interacts with UvrB in an incision complex.

The protein resides in the cytoplasm. Its function is as follows. The UvrABC repair system catalyzes the recognition and processing of DNA lesions. UvrC both incises the 5' and 3' sides of the lesion. The N-terminal half is responsible for the 3' incision and the C-terminal half is responsible for the 5' incision. This Salmonella gallinarum (strain 287/91 / NCTC 13346) protein is UvrABC system protein C.